A 104-amino-acid chain; its full sequence is ATP-dependent Clp protease adapter protein ClpS (104 aa).

This sequence belongs to the ClpS family. Binds to the N-terminal domain of the chaperone ClpA.

Involved in the modulation of the specificity of the ClpAP-mediated ATP-dependent protein degradation. This is ATP-dependent Clp protease adapter protein ClpS from Burkholderia ambifaria (strain MC40-6).